A 242-amino-acid polypeptide reads, in one-letter code: Platinum sensitivity protein 3 (242 aa).

Component of the SHU complex composed of at least CSM2, PSY3, SHU1 and SHU2.

It is found in the nucleus. Its function is as follows. Required for resistance to the DNA-damaging agents methyl methanesulfonate (MMS), cisplatin and oxaliplatin, but not to mitomycin C. Plays a role in protection against mutation accumulation. May be a component of the recombination-repair pathway. The sequence is that of Platinum sensitivity protein 3 (PSY3) from Saccharomyces cerevisiae (strain ATCC 204508 / S288c) (Baker's yeast).